The chain runs to 236 residues: Phosphoribosylaminoimidazole-succinocarboxamide synthase (236 aa).

It belongs to the SAICAR synthetase family.

It catalyses the reaction 5-amino-1-(5-phospho-D-ribosyl)imidazole-4-carboxylate + L-aspartate + ATP = (2S)-2-[5-amino-1-(5-phospho-beta-D-ribosyl)imidazole-4-carboxamido]succinate + ADP + phosphate + 2 H(+). Its pathway is purine metabolism; IMP biosynthesis via de novo pathway; 5-amino-1-(5-phospho-D-ribosyl)imidazole-4-carboxamide from 5-amino-1-(5-phospho-D-ribosyl)imidazole-4-carboxylate: step 1/2. In Campylobacter jejuni subsp. jejuni serotype O:2 (strain ATCC 700819 / NCTC 11168), this protein is Phosphoribosylaminoimidazole-succinocarboxamide synthase.